The sequence spans 420 residues: Tyrosine--tRNA ligase (420 aa).

Tyr-36 contributes to the L-tyrosine binding site. Positions 41-50 (PTADSLHIGH) match the 'HIGH' region motif. L-tyrosine contacts are provided by Tyr-170 and Gln-174. Residues 231–235 (KFGKS) carry the 'KMSKS' region motif. Lys-234 contacts ATP. Residues 353 to 420 (TNIVEVLIET…KKKYFMVNYQ (68 aa)) enclose the S4 RNA-binding domain.

Belongs to the class-I aminoacyl-tRNA synthetase family. TyrS type 1 subfamily. In terms of assembly, homodimer.

It is found in the cytoplasm. The enzyme catalyses tRNA(Tyr) + L-tyrosine + ATP = L-tyrosyl-tRNA(Tyr) + AMP + diphosphate + H(+). In terms of biological role, catalyzes the attachment of tyrosine to tRNA(Tyr) in a two-step reaction: tyrosine is first activated by ATP to form Tyr-AMP and then transferred to the acceptor end of tRNA(Tyr). The protein is Tyrosine--tRNA ligase of Staphylococcus aureus (strain COL).